The sequence spans 192 residues: Leucyl/phenylalanyl-tRNA--protein transferase (192 aa).

The protein belongs to the L/F-transferase family.

It localises to the cytoplasm. It catalyses the reaction N-terminal L-lysyl-[protein] + L-leucyl-tRNA(Leu) = N-terminal L-leucyl-L-lysyl-[protein] + tRNA(Leu) + H(+). The catalysed reaction is N-terminal L-arginyl-[protein] + L-leucyl-tRNA(Leu) = N-terminal L-leucyl-L-arginyl-[protein] + tRNA(Leu) + H(+). The enzyme catalyses L-phenylalanyl-tRNA(Phe) + an N-terminal L-alpha-aminoacyl-[protein] = an N-terminal L-phenylalanyl-L-alpha-aminoacyl-[protein] + tRNA(Phe). Its function is as follows. Functions in the N-end rule pathway of protein degradation where it conjugates Leu, Phe and, less efficiently, Met from aminoacyl-tRNAs to the N-termini of proteins containing an N-terminal arginine or lysine. This Synechococcus sp. (strain JA-3-3Ab) (Cyanobacteria bacterium Yellowstone A-Prime) protein is Leucyl/phenylalanyl-tRNA--protein transferase.